The chain runs to 848 residues: MNNNDLFQASRRRFLAQLGGLTVAGMLGTSLLTPRRATAAQAATEAVISKEGILTGSHWGAIRATVKDGRFVAAKPFELDKYPSKMIAGLPDHVHNAARIRYPMVRVDWLRKRHLSDTSQRGDNRFVRVSWDEALDMFYEELERVQKTHGPSALLTASGWQSTGMFHNASGMLAKAIALHGNSVGTGGDYSTGAAQVILPRVVGSMEVYEQQTSWPLVLQNSKTIVLWGSDLLKNQQANWWCPDHDVYEYYEQLKAKVAAGEIEVISIDPVVTSTHEYLGREHVKHIAVNPQTDVPLQLALAHTLYSENLYDKNFLANYCVGFEQFLPYLLGEKDGQPKDAAWAEKLTGIDAETIRGLARQMAANRTQIIAGWCVQRMQHGEQWAWMIVVLAAMLGQIGLPGGGFGFGWHYNGAGTPGRKGVILSGFSGSTSIPPVHDNSDYKGYSSTIPIARFIDAILEPGKVINWNGKSVKLPPLKMCIFAGTNPFHRHQQINRIIEGWRKLETVIAIDNQWTSTCRFADIVLPATTQFERNDLDQYGNHSNRGIIAMKQVVPPQFEARNDFDIFRELCRRFNREEAFTEGLDEMGWLKRIWQEGVQQGKGRGVHLPAFNDFWNNKEYVEFDHPQMFVRHQAFREDPDLEPLGTPSGLIEIYSKTIADMNYDDCQGHPMWFEKIERSHGGPGSQKYPLHLQSVHPDFRLHSQLCESETLRQQYTVAGKEPVFISPKDASARGIRHGDVVRVFNVRGQVLAGAVVSDRYAPGVARIHEGAWYDPDKGGEPGALCKYGNPNVLTIDIGTSQLAQATSAHTTLVEIEKYNGTVEQVTAFNGPVEMVAQCEYVPASQVKS.

A signal peptide (tat-type signal) is located at residues 1-39 (MNNNDLFQASRRRFLAQLGGLTVAGMLGTSLLTPRRATA). S191 contacts Mo-bis(molybdopterin guanine dinucleotide).

Belongs to the prokaryotic molybdopterin-containing oxidoreductase family. Mo-bis(molybdopterin guanine dinucleotide) is required as a cofactor. In terms of processing, predicted to be exported by the Tat system. The position of the signal peptide cleavage has not been experimentally proven.

The protein resides in the periplasm. The catalysed reaction is trimethylamine + 2 Fe(III)-[cytochrome c] + H2O = trimethylamine N-oxide + 2 Fe(II)-[cytochrome c] + 3 H(+). Its function is as follows. Reduces trimethylamine-N-oxide (TMAO) into trimethylamine; an anaerobic reaction coupled to energy-yielding reactions. In Escherichia coli O6:H1 (strain CFT073 / ATCC 700928 / UPEC), this protein is Trimethylamine-N-oxide reductase 1 (torA).